A 320-amino-acid polypeptide reads, in one-letter code: Lipoyl synthase (320 aa).

Residues cysteine 66, cysteine 71, cysteine 77, cysteine 92, cysteine 96, cysteine 99, and serine 306 each contribute to the [4Fe-4S] cluster site. The region spanning 77–295 (CFGHGTATFM…AEIGYAMGFS (219 aa)) is the Radical SAM core domain.

It belongs to the radical SAM superfamily. Lipoyl synthase family. [4Fe-4S] cluster serves as cofactor.

The protein resides in the cytoplasm. The catalysed reaction is [[Fe-S] cluster scaffold protein carrying a second [4Fe-4S](2+) cluster] + N(6)-octanoyl-L-lysyl-[protein] + 2 oxidized [2Fe-2S]-[ferredoxin] + 2 S-adenosyl-L-methionine + 4 H(+) = [[Fe-S] cluster scaffold protein] + N(6)-[(R)-dihydrolipoyl]-L-lysyl-[protein] + 4 Fe(3+) + 2 hydrogen sulfide + 2 5'-deoxyadenosine + 2 L-methionine + 2 reduced [2Fe-2S]-[ferredoxin]. The protein operates within protein modification; protein lipoylation via endogenous pathway; protein N(6)-(lipoyl)lysine from octanoyl-[acyl-carrier-protein]: step 2/2. In terms of biological role, catalyzes the radical-mediated insertion of two sulfur atoms into the C-6 and C-8 positions of the octanoyl moiety bound to the lipoyl domains of lipoate-dependent enzymes, thereby converting the octanoylated domains into lipoylated derivatives. The chain is Lipoyl synthase from Thioalkalivibrio sulfidiphilus (strain HL-EbGR7).